The chain runs to 586 residues: Kinesin-like protein KIF25 (586 aa).

The stretch at 10-94 (SFWEQRTRQL…VIQKLNQDIQ (85 aa)) forms a coiled coil. Residues 173–565 (NIRVHCRIRP…LGFGIRARQV (393 aa)) enclose the Kinesin motor domain. Residue 267 to 274 (GQTGSGKS) coordinates ATP. 2 disordered regions span residues 417–460 (TADQ…AGRA) and 564–586 (QVQR…RRPD).

The protein belongs to the TRAFAC class myosin-kinesin ATPase superfamily. Kinesin family. In terms of assembly, homotetramer.

The protein localises to the cytoplasm. It is found in the cytoskeleton. Its subcellular location is the microtubule organizing center. It localises to the centrosome. Functionally, minus-end microtubule-dependent motor protein. Acts as a negative regulator of centrosome separation required to prevent premature centrosome separation during interphase. Required to maintain a centered nucleus to ensure that the spindle is stably oriented at the onset of mitosis. May also act as a negative regulator of amino acid starvation-induced autophagy. In Macaca fascicularis (Crab-eating macaque), this protein is Kinesin-like protein KIF25.